Here is a 194-residue protein sequence, read N- to C-terminus: Ribose 1,5-bisphosphate phosphokinase PhnN (194 aa).

Gly24–Asp31 is a binding site for ATP.

This sequence belongs to the ribose 1,5-bisphosphokinase family.

It carries out the reaction alpha-D-ribose 1,5-bisphosphate + ATP = 5-phospho-alpha-D-ribose 1-diphosphate + ADP. It participates in metabolic intermediate biosynthesis; 5-phospho-alpha-D-ribose 1-diphosphate biosynthesis; 5-phospho-alpha-D-ribose 1-diphosphate from D-ribose 5-phosphate (route II): step 3/3. In terms of biological role, catalyzes the phosphorylation of ribose 1,5-bisphosphate to 5-phospho-D-ribosyl alpha-1-diphosphate (PRPP). The sequence is that of Ribose 1,5-bisphosphate phosphokinase PhnN from Rhodopseudomonas palustris (strain ATCC BAA-98 / CGA009).